A 315-amino-acid polypeptide reads, in one-letter code: N-acetyl-gamma-glutamyl-phosphate reductase (315 aa).

The active site involves C117.

It belongs to the NAGSA dehydrogenase family. Type 2 subfamily.

It localises to the cytoplasm. The enzyme catalyses N-acetyl-L-glutamate 5-semialdehyde + phosphate + NADP(+) = N-acetyl-L-glutamyl 5-phosphate + NADPH + H(+). It participates in amino-acid biosynthesis; L-arginine biosynthesis; N(2)-acetyl-L-ornithine from L-glutamate: step 3/4. Catalyzes the NADPH-dependent reduction of N-acetyl-5-glutamyl phosphate to yield N-acetyl-L-glutamate 5-semialdehyde. The chain is N-acetyl-gamma-glutamyl-phosphate reductase from Burkholderia ambifaria (strain ATCC BAA-244 / DSM 16087 / CCUG 44356 / LMG 19182 / AMMD) (Burkholderia cepacia (strain AMMD)).